We begin with the raw amino-acid sequence, 134 residues long: uncharacterized protein (134 aa).

2 consecutive transmembrane segments (helical) span residues 49-69 (VAVPAVLVLAPFWLIPTSLDV) and 71-91 (LSMTLPILIPFVYFSHALNKV).

The protein localises to the cell membrane. This is an uncharacterized protein from Mycobacterium tuberculosis (strain ATCC 25618 / H37Rv).